The sequence spans 367 residues: Peptide chain release factor 2 (367 aa).

Position 250 is an N5-methylglutamine (Q250).

Belongs to the prokaryotic/mitochondrial release factor family. Methylated by PrmC. Methylation increases the termination efficiency of RF2.

The protein localises to the cytoplasm. In terms of biological role, peptide chain release factor 2 directs the termination of translation in response to the peptide chain termination codons UGA and UAA. This Kineococcus radiotolerans (strain ATCC BAA-149 / DSM 14245 / SRS30216) protein is Peptide chain release factor 2.